The primary structure comprises 220 residues: MMAYLVFLGPPGAGKGTYAKRLQEITGIPHISTGDIFRDIVKKENDELGKKIKEIMERGELVPDELVNEVVKRRLSEKDCERGFILDGYPRTVAQAEFLDGFLKTQNKELTAAVLFEVPEEVVVQRLTARRICPKCGRIYNLISLPPKEDELCDDCKVKLVQREDDKEETVRHRYKVYLEKTQPVIDYYDKKGILKRVDGTIGIDNVIAEVLKIIGWSDK.

Glycine 12–threonine 17 contacts ATP. The interval serine 32–valine 62 is NMP. Residues threonine 33, arginine 38, glutamate 60–valine 62, glycine 88–arginine 91, and glutamine 95 each bind AMP. Positions alanine 129–aspartate 166 are LID. Arginine 130 contributes to the ATP binding site. Residues cysteine 133 and cysteine 136 each contribute to the Zn(2+) site. Isoleucine 139–tyrosine 140 serves as a coordination point for ATP. Residues cysteine 153 and cysteine 156 each contribute to the Zn(2+) site. AMP contacts are provided by arginine 163 and arginine 174. ATP is bound at residue isoleucine 202.

It belongs to the adenylate kinase family. As to quaternary structure, monomer.

Its subcellular location is the cytoplasm. It catalyses the reaction AMP + ATP = 2 ADP. The protein operates within purine metabolism; AMP biosynthesis via salvage pathway; AMP from ADP: step 1/1. In terms of biological role, catalyzes the reversible transfer of the terminal phosphate group between ATP and AMP. Plays an important role in cellular energy homeostasis and in adenine nucleotide metabolism. In Thermotoga maritima (strain ATCC 43589 / DSM 3109 / JCM 10099 / NBRC 100826 / MSB8), this protein is Adenylate kinase.